Consider the following 425-residue polypeptide: Monoacylglycerol lipase ABHD2 (425 aa).

The Cytoplasmic segment spans residues methionine 1–glutamate 9. The chain crosses the membrane as a helical; Signal-anchor for type II membrane protein span at residues leucine 10 to valine 30. Residues arginine 31 to glutamate 425 lie on the Extracellular side of the membrane. Residues methionine 128–glycine 382 form the AB hydrolase-1 domain. Asparagine 136 carries an N-linked (GlcNAc...) asparagine glycan. Serine 207 acts as the Nucleophile in catalysis. Active-site charge relay system residues include aspartate 345 and histidine 376. The N-linked (GlcNAc...) asparagine glycan is linked to asparagine 410.

The protein belongs to the AB hydrolase superfamily. AB hydrolase 4 family.

The protein resides in the cell membrane. It carries out the reaction Hydrolyzes glycerol monoesters of long-chain fatty acids.. The enzyme catalyses an acetyl ester + H2O = an aliphatic alcohol + acetate + H(+). It catalyses the reaction a triacylglycerol + H2O = a diacylglycerol + a fatty acid + H(+). The catalysed reaction is 2-(5Z,8Z,11Z,14Z-eicosatetraenoyl)-glycerol + H2O = glycerol + (5Z,8Z,11Z,14Z)-eicosatetraenoate + H(+). It carries out the reaction a butanoate ester + H2O = an aliphatic alcohol + butanoate + H(+). The enzyme catalyses hexadecanoate ester + H2O = an aliphatic alcohol + hexadecanoate + H(+). Acylglycerol lipase activity is activated upon binding to progesterone. In terms of biological role, progesterone-dependent acylglycerol lipase that catalyzes hydrolysis of endocannabinoid arachidonoylglycerol (AG) from cell membrane. Acts as a progesterone receptor: progesterone-binding activates the acylglycerol lipase activity, mediating degradation of 1-arachidonoylglycerol (1AG) and 2-arachidonoylglycerol (2AG) to glycerol and arachidonic acid (AA). Also displays an ester hydrolase activity against acetyl ester, butanoate ester and hexadecanoate ester. Plays a key role in sperm capacitation in response to progesterone by mediating degradation of 2AG, an inhibitor of the sperm calcium channel CatSper, leading to calcium influx via CatSper and sperm activation. May also play a role in smooth muscle cells migration. This Macaca fascicularis (Crab-eating macaque) protein is Monoacylglycerol lipase ABHD2 (ABHD2).